Here is an 859-residue protein sequence, read N- to C-terminus: Linoleate 9S-lipoxygenase 1 (859 aa).

Residues 21 to 161 (VKGTVVLMKK…HYTTDRVFFS (141 aa)) enclose the PLAT domain. The Lipoxygenase domain maps to 164–859 (TYLPHETPAT…GRGIPNSVSI (696 aa)). The interval 213–246 (KNPRPVLGGTQEYPYPRRGRTGRKPTKEDPQTES) is disordered. Residues His-519, His-524, His-711, Asn-715, and Ile-859 each coordinate Fe cation.

It belongs to the lipoxygenase family. Monomer. Fe cation is required as a cofactor. As to expression, seedlings, roots, leaves, and flowers (at protein level). Expressed in guard cells.

The protein resides in the cytoplasm. It catalyses the reaction (9Z,12Z)-octadecadienoate + O2 = (9S)-hydroperoxy-(10E,12Z)-octadecadienoate. The enzyme catalyses (9Z,12Z,15Z)-octadecatrienoate + O2 = (9S)-hydroperoxy-(10E,12Z,15Z)-octadecatrienoate. The protein operates within lipid metabolism; oxylipin biosynthesis. Functionally, 9S-lipoxygenase that can use linoleic acid or linolenic acid as substrates. Plant lipoxygenases may be involved in a number of diverse aspects of plant physiology including growth and development, pest resistance, and senescence or responses to wounding. Catalyzes the hydroperoxidation of lipids containing a cis,cis-1,4-pentadiene structure. Function as regulators of root development by controlling the emergence of lateral roots. 9S-lypoxygenase-derived oxylipins may play an antagonistic role to ethylene signaling in the control of responses involving oxidative stress, lipid peroxidation and plant defense. LOX1-derived oxylipins may be involved in stress signaling from roots to shoots in response to cadmium exposure. 9S-lypoxygenase-derived oxylipins are engaged during infection to control the balance between salicylic acid (SA) and jasmonate (JA) signaling to facilitate infection by the fungal pathogen Fusarium graminearum. 9S-lypoxygenase-derived oxylipins activate brassinosteroid signaling to promote cell wall-based defense and limit pathogen infection. The LOX1-derived compound (9S)-hydroperoxy-(10E,12Z,15Z)-octadecatrienoate protects plant tissues against infection by the bacterial pathogen Pseudomonas syringae pv tomato DC3000. The LOX1-derived oxylipins are required to trigger stomatal closure in response to both infection by the bacterial pathogen Pseudomonas syringae pv tomato DC3000, and the pathogen-associated molecular pattern (PAMP) flagellin peptide flg22. Contributes to the oxidation of free fatty acids during seed aging. The protein is Linoleate 9S-lipoxygenase 1 of Arabidopsis thaliana (Mouse-ear cress).